The primary structure comprises 374 residues: Transcription factor IIIA (374 aa).

7 consecutive C2H2-type zinc fingers follow at residues 23 to 47, 53 to 77, 83 to 107, 113 to 138, 144 to 169, 204 to 226, and 236 to 261; these read FHCP…LRTH, FVCD…KRCH, FSCH…IEVH, YACT…SACH, YPCT…NRAH, PSCS…VVLH, and YHCP…SVIH. The segment at 267–291 adopts a C2H2-type 8; atypical zinc-finger fold; sequence FHCDSCGTKFGYKHMLQRHLERGTC. The C2H2-type 9 zinc finger occupies 349–374; it reads YSCSFPECNYRFKRLYDMHRHLNSHH.

It is found in the nucleus. Its function is as follows. Is required for correct transcription of 5S RNA genes by RNA polymerase III. Also binds the transcribed 5S RNA's. Initiates transcription of the 5S ribosomal RNA gene. This chain is Transcription factor IIIA (sfc2), found in Schizosaccharomyces pombe (strain 972 / ATCC 24843) (Fission yeast).